The sequence spans 411 residues: Carbohydrate sulfotransferase 1 (411 aa).

Topologically, residues 1–2 (MQ) are cytoplasmic. The helical; Signal-anchor for type II membrane protein transmembrane segment at 3-23 (CSWKAVLLLALASIAIQYTAI) threads the bilayer. Residues 24–411 (RTFTAKSFHT…VEERDFRPFL (388 aa)) lie on the Lumenal side of the membrane. A glycan (N-linked (GlcNAc...) asparagine) is linked at asparagine 56. 69 to 75 (TRSGSSF) contributes to the 3'-phosphoadenylyl sulfate binding site. Residues asparagine 145 and asparagine 189 are each glycosylated (N-linked (GlcNAc...) asparagine). 234 to 242 (RDPRGILAS) provides a ligand contact to 3'-phosphoadenylyl sulfate. An N-linked (GlcNAc...) asparagine glycan is attached at asparagine 334. A Cell attachment site motif is present at residues 337 to 339 (RGD).

This sequence belongs to the sulfotransferase 1 family. Gal/GlcNAc/GalNAc subfamily. As to expression, broadly expressed with highest levels in central nervous system. Expressed in cortex (at protein level). Expressed in high endothelial venules in peripheral lymph nodes, mesenteric lymph nodes and Peyer's patches.

The protein resides in the golgi apparatus membrane. The enzyme catalyses 3'-phosphoadenylyl sulfate + keratan = adenosine 3',5'-bisphosphate + keratan 6'-sulfate.. The protein operates within glycan metabolism. Sulfotransferase that utilizes 3'-phospho-5'-adenylyl sulfate (PAPS) as sulfonate donor to catalyze the transfer of sulfate to position 6 of internal galactose (Gal) residues of keratan. Cooperates with B4GALT4 and B3GNT7 glycosyltransferases and CHST6 sulfotransferase to construct and elongate disulfated disaccharide unit [-&gt;3(6-sulfoGalbeta)1-&gt;4(6-sulfoGlcNAcbeta)1-&gt;] within keratan sulfate polymer. Has a preference for sulfating keratan sulfate, but it also transfers sulfate to the unsulfated polymer. Involved in biosynthesis of phosphacan, a major keratan sulfate proteoglycan in the developing brain. Involved in biosynthesis of 6-sulfoGalbeta-containing O-linked glycans in high endothelial venules of lymph nodes. May act in a synergistic manner with CHST4 to generate sialyl 6',6-disulfo Lewis X motif, a recognition determinant for immune cell receptors implicated in leukocyte trafficking. Catalyzes sulfation of N-acetyllactosamine (LacNAc) oligosaccharides with highest efficiency for sialylated LacNAc structures. The protein is Carbohydrate sulfotransferase 1 (Chst1) of Mus musculus (Mouse).